The sequence spans 353 residues: Photosystem II D2 protein (353 aa).

The residue at position 2 (T2) is an N-acetylthreonine. T2 is modified (phosphothreonine). The helical transmembrane segment at 41–61 (CAYFALGGWFTGTTFVTSWYT) threads the bilayer. H118 contacts chlorophyll a. The helical transmembrane segment at 125 to 141 (GFMLRQFELARSVQLRP) threads the bilayer. Pheophytin a is bound by residues Q130 and N143. The chain crosses the membrane as a helical span at residues 153–166 (VFVSVFLIYPLGQS). H198 provides a ligand contact to chlorophyll a. The chain crosses the membrane as a helical span at residues 208–228 (AALLCAIHGATVENTLFEDGD). H215 and F262 together coordinate a plastoquinone. H215 serves as a coordination point for Fe cation. H269 is a Fe cation binding site. Residues 279 to 295 (GLWMSALGVVGLALNLR) traverse the membrane as a helical segment.

This sequence belongs to the reaction center PufL/M/PsbA/D family. In terms of assembly, PSII is composed of 1 copy each of membrane proteins PsbA, PsbB, PsbC, PsbD, PsbE, PsbF, PsbH, PsbI, PsbJ, PsbK, PsbL, PsbM, PsbT, PsbX, PsbY, PsbZ, Psb30/Ycf12, at least 3 peripheral proteins of the oxygen-evolving complex and a large number of cofactors. It forms dimeric complexes. The D1/D2 heterodimer binds P680, chlorophylls that are the primary electron donor of PSII, and subsequent electron acceptors. It shares a non-heme iron and each subunit binds pheophytin, quinone, additional chlorophylls, carotenoids and lipids. There is also a Cl(-1) ion associated with D1 and D2, which is required for oxygen evolution. The PSII complex binds additional chlorophylls, carotenoids and specific lipids. serves as cofactor.

It localises to the plastid. The protein resides in the chloroplast thylakoid membrane. The catalysed reaction is 2 a plastoquinone + 4 hnu + 2 H2O = 2 a plastoquinol + O2. Its function is as follows. Photosystem II (PSII) is a light-driven water:plastoquinone oxidoreductase that uses light energy to abstract electrons from H(2)O, generating O(2) and a proton gradient subsequently used for ATP formation. It consists of a core antenna complex that captures photons, and an electron transfer chain that converts photonic excitation into a charge separation. The D1/D2 (PsbA/PsbD) reaction center heterodimer binds P680, the primary electron donor of PSII as well as several subsequent electron acceptors. D2 is needed for assembly of a stable PSII complex. In Nandina domestica (Heavenly bamboo), this protein is Photosystem II D2 protein.